The following is a 295-amino-acid chain: Pyridoxal 5'-phosphate synthase subunit PdxS (295 aa).

Asp-25 provides a ligand contact to D-ribose 5-phosphate. Lys-82 serves as the catalytic Schiff-base intermediate with D-ribose 5-phosphate. Gly-154 is a D-ribose 5-phosphate binding site. Arg-166 is a binding site for D-glyceraldehyde 3-phosphate. Residues Gly-215 and 236–237 each bind D-ribose 5-phosphate; that span reads GS.

It belongs to the PdxS/SNZ family. In the presence of PdxT, forms a dodecamer of heterodimers.

The enzyme catalyses aldehydo-D-ribose 5-phosphate + D-glyceraldehyde 3-phosphate + L-glutamine = pyridoxal 5'-phosphate + L-glutamate + phosphate + 3 H2O + H(+). It participates in cofactor biosynthesis; pyridoxal 5'-phosphate biosynthesis. Its function is as follows. Catalyzes the formation of pyridoxal 5'-phosphate from ribose 5-phosphate (RBP), glyceraldehyde 3-phosphate (G3P) and ammonia. The ammonia is provided by the PdxT subunit. Can also use ribulose 5-phosphate and dihydroxyacetone phosphate as substrates, resulting from enzyme-catalyzed isomerization of RBP and G3P, respectively. This is Pyridoxal 5'-phosphate synthase subunit PdxS from Bacillus cytotoxicus (strain DSM 22905 / CIP 110041 / 391-98 / NVH 391-98).